Reading from the N-terminus, the 29-residue chain is GWTLNSAGYLLGPHGIDGHRTLSDKHGLA.

Position 29 is an alanine amide (alanine 29).

This sequence belongs to the galanin family.

It localises to the secreted. Functionally, contracts smooth muscle of the gastrointestinal and genitourinary tract, regulates growth hormone release, modulates insulin release, and may be involved in the control of adrenal secretion. The chain is Galanin (gal) from Oncorhynchus mykiss (Rainbow trout).